We begin with the raw amino-acid sequence, 357 residues long: Alternative oxidase, mitochondrial (357 aa).

The chain crosses the membrane as a helical span at residues 152-172 (LTRCIFLESIAGVPGAVASFI). Fe cation is bound by residues E159, E198, and H201. Residues 218 to 238 (IIYVGQGVFCNLFFLFYLANP) form a helical membrane-spanning segment. The Fe cation site is built by E249, E304, and H307. The tract at residues 330–357 (IPDLKEPQPESGLKVTKPHGWEKEELKL) is disordered. Residues 348-357 (HGWEKEELKL) show a composition bias toward basic and acidic residues.

Belongs to the alternative oxidase family. It depends on Fe cation as a cofactor.

It localises to the mitochondrion inner membrane. Its function is as follows. Catalyzes cyanide-resistant oxygen consumption. May increase respiration when the cytochrome respiratory pathway is restricted, or in response to low temperatures. In Scheffersomyces stipitis (strain ATCC 58785 / CBS 6054 / NBRC 10063 / NRRL Y-11545) (Yeast), this protein is Alternative oxidase, mitochondrial (STO1).